Reading from the N-terminus, the 477-residue chain is Bifunctional protein HldE (477 aa).

Residues 1–318 form a ribokinase region; sequence MKVNLPAFER…ENAVRGRAAT (318 aa). Residue 195–198 participates in ATP binding; it reads NLSE. Residue D264 is part of the active site. A cytidylyltransferase region spans residues 344–477; that stretch reads MTNGVFDILH…IKKIQTESEK (134 aa).

It in the N-terminal section; belongs to the carbohydrate kinase PfkB family. This sequence in the C-terminal section; belongs to the cytidylyltransferase family. In terms of assembly, homodimer.

It carries out the reaction D-glycero-beta-D-manno-heptose 7-phosphate + ATP = D-glycero-beta-D-manno-heptose 1,7-bisphosphate + ADP + H(+). The enzyme catalyses D-glycero-beta-D-manno-heptose 1-phosphate + ATP + H(+) = ADP-D-glycero-beta-D-manno-heptose + diphosphate. The protein operates within nucleotide-sugar biosynthesis; ADP-L-glycero-beta-D-manno-heptose biosynthesis; ADP-L-glycero-beta-D-manno-heptose from D-glycero-beta-D-manno-heptose 7-phosphate: step 1/4. It participates in nucleotide-sugar biosynthesis; ADP-L-glycero-beta-D-manno-heptose biosynthesis; ADP-L-glycero-beta-D-manno-heptose from D-glycero-beta-D-manno-heptose 7-phosphate: step 3/4. Catalyzes the phosphorylation of D-glycero-D-manno-heptose 7-phosphate at the C-1 position to selectively form D-glycero-beta-D-manno-heptose-1,7-bisphosphate. In terms of biological role, catalyzes the ADP transfer from ATP to D-glycero-beta-D-manno-heptose 1-phosphate, yielding ADP-D-glycero-beta-D-manno-heptose. The polypeptide is Bifunctional protein HldE (Salmonella arizonae (strain ATCC BAA-731 / CDC346-86 / RSK2980)).